We begin with the raw amino-acid sequence, 439 residues long: 3-phosphoshikimate 1-carboxyvinyltransferase (439 aa).

Lys-29, Ser-30, and Arg-34 together coordinate 3-phosphoshikimate. Lys-29 is a binding site for phosphoenolpyruvate. Phosphoenolpyruvate is bound by residues Gly-100 and Arg-128. 3-phosphoshikimate contacts are provided by Ser-173, Ser-174, Gln-175, Ser-201, Asp-321, and Lys-348. Gln-175 is a phosphoenolpyruvate binding site. Asp-321 (proton acceptor) is an active-site residue. Residues Arg-352 and Arg-395 each coordinate phosphoenolpyruvate.

It belongs to the EPSP synthase family. Monomer.

The protein localises to the cytoplasm. It carries out the reaction 3-phosphoshikimate + phosphoenolpyruvate = 5-O-(1-carboxyvinyl)-3-phosphoshikimate + phosphate. It functions in the pathway metabolic intermediate biosynthesis; chorismate biosynthesis. Catalyzes the transfer of the enolpyruvyl moiety of phosphoenolpyruvate (PEP) to the 5-hydroxyl of shikimate-3-phosphate (S3P) to produce enolpyruvyl shikimate-3-phosphate and inorganic phosphate. This Halobacterium salinarum (strain ATCC 700922 / JCM 11081 / NRC-1) (Halobacterium halobium) protein is 3-phosphoshikimate 1-carboxyvinyltransferase.